The sequence spans 432 residues: Adenylosuccinate synthetase (432 aa).

Residues 13 to 19 and 41 to 43 contribute to the GTP site; these read GDEGKGK and GHT. Aspartate 14 serves as the catalytic Proton acceptor. Residues aspartate 14 and glycine 41 each coordinate Mg(2+). IMP contacts are provided by residues 14-17, 39-42, threonine 131, arginine 145, glutamine 226, threonine 241, and arginine 305; these read DEGK and NAGH. Histidine 42 acts as the Proton donor in catalysis. 301-307 provides a ligand contact to substrate; the sequence is SVTGRAR. GTP-binding positions include arginine 307, 333-335, and 416-418; these read KLD and STG.

The protein belongs to the adenylosuccinate synthetase family. Homodimer. Mg(2+) serves as cofactor.

It localises to the cytoplasm. The enzyme catalyses IMP + L-aspartate + GTP = N(6)-(1,2-dicarboxyethyl)-AMP + GDP + phosphate + 2 H(+). The protein operates within purine metabolism; AMP biosynthesis via de novo pathway; AMP from IMP: step 1/2. Its function is as follows. Plays an important role in the de novo pathway of purine nucleotide biosynthesis. Catalyzes the first committed step in the biosynthesis of AMP from IMP. The sequence is that of Adenylosuccinate synthetase from Neisseria meningitidis serogroup A / serotype 4A (strain DSM 15465 / Z2491).